We begin with the raw amino-acid sequence, 114 residues long: MARVTVEDCVDKVPNRFDLVLLAAERARAISGGAELTVDRDRDKNPVVALREIAEETVRPAVLKENLIQSLQRVLPDDDDEVDEIGSLSQSAEALRITAAAPVRNTSLGADYDG.

The protein belongs to the RNA polymerase subunit omega family. As to quaternary structure, the RNAP catalytic core consists of 2 alpha, 1 beta, 1 beta' and 1 omega subunit. When a sigma factor is associated with the core the holoenzyme is formed, which can initiate transcription.

The catalysed reaction is RNA(n) + a ribonucleoside 5'-triphosphate = RNA(n+1) + diphosphate. Functionally, promotes RNA polymerase assembly. Latches the N- and C-terminal regions of the beta' subunit thereby facilitating its interaction with the beta and alpha subunits. This chain is DNA-directed RNA polymerase subunit omega, found in Novosphingobium aromaticivorans (strain ATCC 700278 / DSM 12444 / CCUG 56034 / CIP 105152 / NBRC 16084 / F199).